The chain runs to 1679 residues: [F-actin]-monooxygenase mical2b (1679 aa).

The monooxygenase domain stretch occupies residues 2–494 (GETEEERTSQ…RHLFISGEQD (493 aa)). Residues C97, 97–125 (CGFR…SRNN), E116, R118, R123, N125, and D398 contribute to the FAD site. The 104-residue stretch at 516 to 619 (EVRPGRLLLW…MVLYLSKFYE (104 aa)) folds into the Calponin-homology (CH) domain. The short motif at 658–679 (RKRIPKLDKKLEESDVNRKRKK) is the Nuclear localization signal element. 8 disordered regions span residues 661 to 772 (IPKL…KAKW), 818 to 838 (SAYK…TPTL), 874 to 907 (SSLF…ESST), 1073 to 1163 (STRH…RSTA), 1194 to 1247 (KPED…DEIP), 1259 to 1283 (EYPK…ISFS), 1302 to 1342 (DLTN…PAPP), and 1473 to 1509 (RNKA…KKKE). Composition is skewed to basic and acidic residues over residues 662-674 (PKLD…SDVN) and 697-707 (GEREEQKENKV). Polar residues predominate over residues 874–888 (SSLFTGNPAQPQTDE). An LIM zinc-binding domain is found at 1011-1073 (DTCVFCQKRV…KMHFSQRKTS (63 aa)). Residues 1086–1099 (IRSSSITISNHTST) are compositionally biased toward low complexity. Residues 1112 to 1123 (DSSTQQDLQTLP) show a composition bias toward polar residues. Residues 1133 to 1143 (EVKDSSKKADP) are compositionally biased toward basic and acidic residues. The segment covering 1144–1154 (ADSAPACPDSP) has biased composition (low complexity). Residues 1202–1211 (LAEEDGNSDF) show a composition bias toward acidic residues. Positions 1220–1242 (SKKPSNPSTDSNCLPTKDNSSTP) are enriched in polar residues. Positions 1259–1270 (EYPKPSSSSPEP) are enriched in low complexity. A compositionally biased stretch (polar residues) spans 1302-1325 (DLTNPGKSGAEEQQQQHVKPSISL). Residues 1333-1342 (THPQPEPAPP) are compositionally biased toward pro residues. Low complexity predominate over residues 1475 to 1489 (KASAQQQQQQKSNSS). The 151-residue stretch at 1517 to 1667 (KSDELKRLHR…EKAEDRDLES (151 aa)) folds into the bMERB domain.

The protein belongs to the Mical family. It depends on FAD as a cofactor.

Its subcellular location is the nucleus. It is found in the cytoplasm. The enzyme catalyses L-methionyl-[F-actin] + NADPH + O2 + H(+) = L-methionyl-(R)-S-oxide-[F-actin] + NADP(+) + H2O. Nuclear monooxygenase that promotes depolymerization of F-actin by mediating oxidation of specific methionine residues on actin and regulates the srf signaling. Acts by modifying nuclear actin subunits through the addition of oxygen to form methionine-sulfoxide, leading to promote actin filament severing and prevent repolymerization. Acts as a key regulator of the srf signaling pathway elicited by nerve growth factor and serum: mediates oxidation and subsequent depolymerization of nuclear actin, leading to increase mkl1/mrtf-a presence in the nucleus and promote srf:mkl1/mrtf-a-dependent gene transcription. In Danio rerio (Zebrafish), this protein is [F-actin]-monooxygenase mical2b.